Reading from the N-terminus, the 133-residue chain is UPF0047 protein Rv2556c (133 aa).

It belongs to the UPF0047 family.

The chain is UPF0047 protein Rv2556c from Mycobacterium tuberculosis (strain ATCC 25618 / H37Rv).